Here is a 247-residue protein sequence, read N- to C-terminus: Cell division protein ZapD (247 aa).

Belongs to the ZapD family. Interacts with FtsZ.

The protein localises to the cytoplasm. Cell division factor that enhances FtsZ-ring assembly. Directly interacts with FtsZ and promotes bundling of FtsZ protofilaments, with a reduction in FtsZ GTPase activity. The polypeptide is Cell division protein ZapD (Salmonella dublin (strain CT_02021853)).